A 430-amino-acid polypeptide reads, in one-letter code: UDP-N-acetylmuramoylalanine--D-glutamate ligase (430 aa).

105–111 (GSNGKTT) lines the ATP pocket.

It belongs to the MurCDEF family.

The protein localises to the cytoplasm. It catalyses the reaction UDP-N-acetyl-alpha-D-muramoyl-L-alanine + D-glutamate + ATP = UDP-N-acetyl-alpha-D-muramoyl-L-alanyl-D-glutamate + ADP + phosphate + H(+). It functions in the pathway cell wall biogenesis; peptidoglycan biosynthesis. Its function is as follows. Cell wall formation. Catalyzes the addition of glutamate to the nucleotide precursor UDP-N-acetylmuramoyl-L-alanine (UMA). This is UDP-N-acetylmuramoylalanine--D-glutamate ligase from Pseudothermotoga lettingae (strain ATCC BAA-301 / DSM 14385 / NBRC 107922 / TMO) (Thermotoga lettingae).